Here is a 337-residue protein sequence, read N- to C-terminus: Tryptophan--tRNA ligase (337 aa).

ATP is bound by residues 12–14 (QPS) and 21–22 (GN). A 'HIGH' region motif is present at residues 13–22 (PSADSLHLGN). Asp138 is an L-tryptophan binding site. Residues 150–152 (GDD), Ile189, and 198–202 (KMSKS) contribute to the ATP site. Positions 198–202 (KMSKS) match the 'KMSKS' region motif.

This sequence belongs to the class-I aminoacyl-tRNA synthetase family. Homodimer.

It is found in the cytoplasm. The catalysed reaction is tRNA(Trp) + L-tryptophan + ATP = L-tryptophyl-tRNA(Trp) + AMP + diphosphate + H(+). In terms of biological role, catalyzes the attachment of tryptophan to tRNA(Trp). This is Tryptophan--tRNA ligase from Leifsonia xyli subsp. xyli (strain CTCB07).